The primary structure comprises 916 residues: Protein translocase subunit SecA (916 aa).

Residues Gln-87, 105-109 (GEGKT), and Asp-507 contribute to the ATP site. Zn(2+) is bound by residues Cys-900, Cys-902, Cys-911, and His-912.

It belongs to the SecA family. As to quaternary structure, monomer and homodimer. Part of the essential Sec protein translocation apparatus which comprises SecA, SecYEG and auxiliary proteins SecDF-YajC and YidC. Zn(2+) is required as a cofactor.

It localises to the cell inner membrane. The protein localises to the cytoplasm. The catalysed reaction is ATP + H2O + cellular proteinSide 1 = ADP + phosphate + cellular proteinSide 2.. Functionally, part of the Sec protein translocase complex. Interacts with the SecYEG preprotein conducting channel. Has a central role in coupling the hydrolysis of ATP to the transfer of proteins into and across the cell membrane, serving both as a receptor for the preprotein-SecB complex and as an ATP-driven molecular motor driving the stepwise translocation of polypeptide chains across the membrane. The sequence is that of Protein translocase subunit SecA from Neisseria meningitidis serogroup B (strain ATCC BAA-335 / MC58).